The primary structure comprises 135 residues: Transcription antitermination protein NusB (135 aa).

It belongs to the NusB family.

Its function is as follows. Involved in transcription antitermination. Required for transcription of ribosomal RNA (rRNA) genes. Binds specifically to the boxA antiterminator sequence of the ribosomal RNA (rrn) operons. This is Transcription antitermination protein NusB from Shewanella halifaxensis (strain HAW-EB4).